The sequence spans 445 residues: tRNA(Ile)-lysidine synthase (445 aa).

38–43 serves as a coordination point for ATP; sequence SGGLDS.

It belongs to the tRNA(Ile)-lysidine synthase family.

The protein localises to the cytoplasm. It carries out the reaction cytidine(34) in tRNA(Ile2) + L-lysine + ATP = lysidine(34) in tRNA(Ile2) + AMP + diphosphate + H(+). Functionally, ligates lysine onto the cytidine present at position 34 of the AUA codon-specific tRNA(Ile) that contains the anticodon CAU, in an ATP-dependent manner. Cytidine is converted to lysidine, thus changing the amino acid specificity of the tRNA from methionine to isoleucine. The chain is tRNA(Ile)-lysidine synthase from Neisseria gonorrhoeae (strain ATCC 700825 / FA 1090).